The primary structure comprises 198 residues: Outer-membrane lipoprotein carrier protein (198 aa).

The N-terminal stretch at 1-17 is a signal peptide; the sequence is MKKFLFSLCLLSSTVLA.

The protein belongs to the LolA family. In terms of assembly, monomer.

The protein localises to the periplasm. Its function is as follows. Participates in the translocation of lipoproteins from the inner membrane to the outer membrane. Only forms a complex with a lipoprotein if the residue after the N-terminal Cys is not an aspartate (The Asp acts as a targeting signal to indicate that the lipoprotein should stay in the inner membrane). The polypeptide is Outer-membrane lipoprotein carrier protein (Aliivibrio fischeri (strain ATCC 700601 / ES114) (Vibrio fischeri)).